Consider the following 500-residue polypeptide: ACT domain-containing protein ACR2 (500 aa).

4 ACT domains span residues 39-121 (VVKV…EANN), 136-213 (AIEM…ADPA), 298-373 (IVTV…RVCE), and 376-459 (KLEL…TVGS). A disordered region spans residues 450–478 (EDTKIDTVGSDEPTASASATPQRQPQPHR). The segment covering 462–474 (PTASASATPQRQP) has biased composition (polar residues).

May bind amino acids. This chain is ACT domain-containing protein ACR2, found in Arabidopsis thaliana (Mouse-ear cress).